The chain runs to 114 residues: Ribosome-binding factor A (114 aa).

This sequence belongs to the RbfA family. In terms of assembly, monomer. Binds 30S ribosomal subunits, but not 50S ribosomal subunits or 70S ribosomes.

It localises to the cytoplasm. In terms of biological role, one of several proteins that assist in the late maturation steps of the functional core of the 30S ribosomal subunit. Associates with free 30S ribosomal subunits (but not with 30S subunits that are part of 70S ribosomes or polysomes). Required for efficient processing of 16S rRNA. May interact with the 5'-terminal helix region of 16S rRNA. The sequence is that of Ribosome-binding factor A from Vesicomyosocius okutanii subsp. Calyptogena okutanii (strain HA).